A 477-amino-acid chain; its full sequence is UDP-N-acetylmuramoylalanine--D-glutamate ligase (477 aa).

Residue 125 to 131 (GTNGKST) participates in ATP binding.

It belongs to the MurCDEF family.

The protein localises to the cytoplasm. The catalysed reaction is UDP-N-acetyl-alpha-D-muramoyl-L-alanine + D-glutamate + ATP = UDP-N-acetyl-alpha-D-muramoyl-L-alanyl-D-glutamate + ADP + phosphate + H(+). It functions in the pathway cell wall biogenesis; peptidoglycan biosynthesis. Cell wall formation. Catalyzes the addition of glutamate to the nucleotide precursor UDP-N-acetylmuramoyl-L-alanine (UMA). This chain is UDP-N-acetylmuramoylalanine--D-glutamate ligase, found in Rhodospirillum rubrum (strain ATCC 11170 / ATH 1.1.1 / DSM 467 / LMG 4362 / NCIMB 8255 / S1).